The chain runs to 318 residues: Thymidylate synthase (318 aa).

DUMP contacts are provided by residues R25 and 180-181 (RR). C200 functions as the Nucleophile in the catalytic mechanism. Residues 220–223 (RSGD), N231, and 261–263 (HIY) each bind dUMP. D223 is a binding site for (6R)-5,10-methylene-5,6,7,8-tetrahydrofolate. (6R)-5,10-methylene-5,6,7,8-tetrahydrofolate is bound at residue A317.

Belongs to the thymidylate synthase family. Bacterial-type ThyA subfamily. Homodimer.

The protein resides in the cytoplasm. The enzyme catalyses dUMP + (6R)-5,10-methylene-5,6,7,8-tetrahydrofolate = 7,8-dihydrofolate + dTMP. It functions in the pathway pyrimidine metabolism; dTTP biosynthesis. Functionally, catalyzes the reductive methylation of 2'-deoxyuridine-5'-monophosphate (dUMP) to 2'-deoxythymidine-5'-monophosphate (dTMP) while utilizing 5,10-methylenetetrahydrofolate (mTHF) as the methyl donor and reductant in the reaction, yielding dihydrofolate (DHF) as a by-product. This enzymatic reaction provides an intracellular de novo source of dTMP, an essential precursor for DNA biosynthesis. The protein is Thymidylate synthase of Lactobacillus helveticus (strain DPC 4571).